The chain runs to 184 residues: Large ribosomal subunit protein uL6 (184 aa).

The protein belongs to the universal ribosomal protein uL6 family. As to quaternary structure, part of the 50S ribosomal subunit.

This protein binds to the 23S rRNA, and is important in its secondary structure. It is located near the subunit interface in the base of the L7/L12 stalk, and near the tRNA binding site of the peptidyltransferase center. This Thermotoga neapolitana (strain ATCC 49049 / DSM 4359 / NBRC 107923 / NS-E) protein is Large ribosomal subunit protein uL6.